We begin with the raw amino-acid sequence, 392 residues long: Stilbene synthase 6 (392 aa).

55–58 (KFNR) is a substrate binding site. Residue cysteine 164 is part of the active site. Residues leucine 267 and 305–307 (GGP) contribute to the substrate site.

The protein belongs to the thiolase-like superfamily. Chalcone/stilbene synthases family. In terms of assembly, homodimer.

Its subcellular location is the cytoplasm. It carries out the reaction 4-coumaroyl-CoA + 3 malonyl-CoA + 3 H(+) = trans-resveratrol + 4 CO2 + 4 CoA. It participates in phytoalexin biosynthesis; 3,4',5-trihydroxystilbene biosynthesis; 3,4',5-trihydroxystilbene from trans-4-coumarate: step 2/2. Its function is as follows. Mediates resistance to pathogens which are sensitive to stilbenes. The protein is Stilbene synthase 6 (STS) of Vitis vinifera (Grape).